The primary structure comprises 1162 residues: Glycerophosphocholine phosphodiesterase GDE1 (1162 aa).

In terms of domain architecture, SPX spans Met1–Val155. 6 ANK repeats span residues Tyr346–Leu375, Glu392–Leu421, Cys423–Tyr452, Arg458–Ile487, Phe492–Ile521, and Ser525–Leu554. The GP-PDE domain occupies Thr817–Leu1146.

The protein belongs to the GDE1 family.

It is found in the cytoplasm. It catalyses the reaction sn-glycerol 3-phosphocholine + H2O = sn-glycerol 3-phosphate + choline + H(+). Glycerophosphocholine glycerophosphodiesterase responsible for the hydrolysis of intracellular glycerophosphocholine into glycerol-phosphate and choline. The choline is used for phosphatidyl-choline synthesis. Required for utilization of glycerophosphocholine as phosphate source. C.albicans can utilize GroPCho through transport and intracellular hydrolysis or through extracellular hydrolysis. The chain is Glycerophosphocholine phosphodiesterase GDE1 from Candida albicans (strain SC5314 / ATCC MYA-2876) (Yeast).